The following is a 164-amino-acid chain: FMN reductase (NADH) RutF (164 aa).

It belongs to the non-flavoprotein flavin reductase family. RutF subfamily.

It carries out the reaction FMNH2 + NAD(+) = FMN + NADH + 2 H(+). Its function is as follows. Catalyzes the reduction of FMN to FMNH2 which is used to reduce pyrimidine by RutA via the Rut pathway. The chain is FMN reductase (NADH) RutF from Enterobacter sp. (strain 638).